A 1270-amino-acid chain; its full sequence is Microtubule-associated tumor suppressor 1 homolog (1270 aa).

Residues 1 to 14 (MTDDNSDDKIEDEL) are compositionally biased toward acidic residues. Disordered regions lie at residues 1–50 (MTDD…NSAN), 183–217 (SFHT…DKMH), and 374–402 (TEDT…SPPG). The span at 39–50 (SSASSVNWNSAN) shows a compositional bias: low complexity. The residue at position 186 (Thr186) is a Phosphothreonine. Positions 200–211 (TSSLSYSTWTSS) are enriched in low complexity. Residues Ser386, Ser399, and Ser443 each carry the phosphoserine modification. The span at 386-396 (SGTQNHTSELI) shows a compositional bias: polar residues. Disordered regions lie at residues 524 to 558 (DAAL…RTPR) and 592 to 622 (THSK…SSSN). The segment covering 538–547 (SASSPSSAIS) has biased composition (low complexity). A Phosphoserine modification is found at Ser629. Composition is skewed to polar residues over residues 701–710 (SKTTTTSGRN), 759–776 (VSSS…SSWV), and 797–816 (TGST…YSNN). The disordered stretch occupies residues 701-816 (SKTTTTSGRN…HSELSTYSNN (116 aa)). Residues 940-1231 (IQHLLSEREE…RLSMENEELL (292 aa)) are a coiled coil. Residues Ser1203, Ser1224, Ser1245, Ser1255, Ser1259, Ser1261, Ser1264, and Ser1268 each carry the phosphoserine modification. The tract at residues 1237 to 1270 (GDLCSPKRSPTSSAIPFQSPRNSGSFPSPSISPR) is disordered. The span at 1244 to 1270 (RSPTSSAIPFQSPRNSGSFPSPSISPR) shows a compositional bias: polar residues.

It belongs to the MTUS1 family. As to quaternary structure, homodimer. Interacts with AGTR2. Interacts with PTPN6. Associates with microtubules.

It is found in the mitochondrion. The protein resides in the golgi apparatus. It localises to the cell membrane. The protein localises to the nucleus. Its function is as follows. Cooperates with AGTR2 to inhibit ERK2 activation and cell proliferation. May be required for AGTR2 cell surface expression. Together with PTPN6, induces UBE2V2 expression upon angiotensin-II stimulation. The polypeptide is Microtubule-associated tumor suppressor 1 homolog (MTUS1) (Pongo abelii (Sumatran orangutan)).